Reading from the N-terminus, the 302-residue chain is 4-hydroxy-tetrahydrodipicolinate synthase (302 aa).

T55 serves as a coordination point for pyruvate. The active-site Proton donor/acceptor is Y144. The active-site Schiff-base intermediate with substrate is the K172. V214 is a binding site for pyruvate.

The protein belongs to the DapA family. In terms of assembly, homotetramer; dimer of dimers.

It is found in the cytoplasm. It carries out the reaction L-aspartate 4-semialdehyde + pyruvate = (2S,4S)-4-hydroxy-2,3,4,5-tetrahydrodipicolinate + H2O + H(+). It functions in the pathway amino-acid biosynthesis; L-lysine biosynthesis via DAP pathway; (S)-tetrahydrodipicolinate from L-aspartate: step 3/4. Functionally, catalyzes the condensation of (S)-aspartate-beta-semialdehyde [(S)-ASA] and pyruvate to 4-hydroxy-tetrahydrodipicolinate (HTPA). The protein is 4-hydroxy-tetrahydrodipicolinate synthase of Synechococcus sp. (strain CC9605).